The sequence spans 603 residues: Terpenoid synthase 22 (603 aa).

Residues Asp356, Asp360, Asn500, and Glu508 each coordinate Mg(2+). Residues 356–360 carry the DDXXD motif motif; it reads DDTCD.

Belongs to the terpene synthase family. Tpsa subfamily. Mg(2+) is required as a cofactor. The cofactor is Mn(2+). In terms of tissue distribution, predominantly expressed in siliques but also in flowers.

It localises to the cytoplasm. Its pathway is secondary metabolite biosynthesis; terpenoid biosynthesis. Its function is as follows. Involved in terpene biosynthesis in roots. Possesses sesquiterpene (C15) synthase activity in vitro. Does not seem to be involved in diterpene (C20) biosynthesis. This is Terpenoid synthase 22 from Arabidopsis thaliana (Mouse-ear cress).